Consider the following 215-residue polypeptide: MVSLEVRLRTPKGKREAKRLRRRGEVPAVVYGPATDPIPVKIKRSLLEKVFHTITETTPIRLVIKDDEERTVSEKTVFLKMIQRDKVSEAIVHVDFYEPVKGHRMRINVPLKVVGKPVGVEKGGFLEVYHEEIPVETDPDRVPQEIEVDVSSLDLGDVIHARDLKLPEGVKCLLEDEEAVVSILVPKEVSIEEEEVEEEVAEPEVIKRKEEEEEE.

A compositionally biased stretch (acidic residues) spans 192 to 202 (EEEEVEEEVAE). Residues 192–215 (EEEEVEEEVAEPEVIKRKEEEEEE) are disordered. A compositionally biased stretch (basic and acidic residues) spans 204-215 (EVIKRKEEEEEE).

Belongs to the bacterial ribosomal protein bL25 family. CTC subfamily. In terms of assembly, part of the 50S ribosomal subunit; part of the 5S rRNA/L5/L18/L25 subcomplex. Contacts the 5S rRNA. Binds to the 5S rRNA independently of L5 and L18.

Its function is as follows. This is one of the proteins that binds to the 5S RNA in the ribosome where it forms part of the central protuberance. This is Large ribosomal subunit protein bL25 from Thermotoga neapolitana (strain ATCC 49049 / DSM 4359 / NBRC 107923 / NS-E).